The primary structure comprises 239 residues: Serine protease SplF (239 aa).

Positions 1-36 (MNKNIIIKSIAALTILTSITGVGTTVVDGIQQTAKA) are cleaved as a signal peptide. Active-site charge relay system residues include His75, Asp114, and Ser192.

This sequence belongs to the peptidase S1B family.

The protein localises to the secreted. In Staphylococcus aureus (strain MSSA476), this protein is Serine protease SplF (splF).